A 455-amino-acid polypeptide reads, in one-letter code: Bifunctional protein GlmU (455 aa).

Residues 1–227 form a pyrophosphorylase region; it reads MGLSVIILAA…CEEVQGVNDR (227 aa). UDP-N-acetyl-alpha-D-glucosamine is bound by residues 8–11, K22, Q73, 78–79, 100–102, G137, E152, N167, and N225; these read LAAG, GT, and YGD. Residue D102 coordinates Mg(2+). N225 lines the Mg(2+) pocket. Positions 228 to 248 are linker; that stretch reads WELTKLERYYQRLMAKKLSLA. The tract at residues 249–455 is N-acetyltransferase; sequence GVTIIDPERF…KGWHRPTKKE (207 aa). UDP-N-acetyl-alpha-D-glucosamine contacts are provided by R332 and K350. Residue H362 is the Proton acceptor of the active site. UDP-N-acetyl-alpha-D-glucosamine-binding residues include Y365 and N376. Residues A379, 385 to 386, S404, A422, and R439 each bind acetyl-CoA; that span reads NY.

The protein in the N-terminal section; belongs to the N-acetylglucosamine-1-phosphate uridyltransferase family. This sequence in the C-terminal section; belongs to the transferase hexapeptide repeat family. As to quaternary structure, homotrimer. Mg(2+) is required as a cofactor.

Its subcellular location is the cytoplasm. It catalyses the reaction alpha-D-glucosamine 1-phosphate + acetyl-CoA = N-acetyl-alpha-D-glucosamine 1-phosphate + CoA + H(+). It carries out the reaction N-acetyl-alpha-D-glucosamine 1-phosphate + UTP + H(+) = UDP-N-acetyl-alpha-D-glucosamine + diphosphate. It participates in nucleotide-sugar biosynthesis; UDP-N-acetyl-alpha-D-glucosamine biosynthesis; N-acetyl-alpha-D-glucosamine 1-phosphate from alpha-D-glucosamine 6-phosphate (route II): step 2/2. Its pathway is nucleotide-sugar biosynthesis; UDP-N-acetyl-alpha-D-glucosamine biosynthesis; UDP-N-acetyl-alpha-D-glucosamine from N-acetyl-alpha-D-glucosamine 1-phosphate: step 1/1. The protein operates within bacterial outer membrane biogenesis; LPS lipid A biosynthesis. Catalyzes the last two sequential reactions in the de novo biosynthetic pathway for UDP-N-acetylglucosamine (UDP-GlcNAc). The C-terminal domain catalyzes the transfer of acetyl group from acetyl coenzyme A to glucosamine-1-phosphate (GlcN-1-P) to produce N-acetylglucosamine-1-phosphate (GlcNAc-1-P), which is converted into UDP-GlcNAc by the transfer of uridine 5-monophosphate (from uridine 5-triphosphate), a reaction catalyzed by the N-terminal domain. In Coxiella burnetii (strain CbuK_Q154) (Coxiella burnetii (strain Q154)), this protein is Bifunctional protein GlmU.